Consider the following 162-residue polypeptide: Large ribosomal subunit protein uL10 (162 aa).

The protein belongs to the universal ribosomal protein uL10 family. Part of the ribosomal stalk of the 50S ribosomal subunit. The N-terminus interacts with L11 and the large rRNA to form the base of the stalk. The C-terminus forms an elongated spine to which L12 dimers bind in a sequential fashion forming a multimeric L10(L12)X complex.

Forms part of the ribosomal stalk, playing a central role in the interaction of the ribosome with GTP-bound translation factors. The sequence is that of Large ribosomal subunit protein uL10 from Aliarcobacter butzleri (strain RM4018) (Arcobacter butzleri).